Consider the following 439-residue polypeptide: Probable tRNA pseudouridine synthase D (439 aa).

D87 serves as the catalytic Nucleophile. Residues 166-391 enclose the TRUD domain; the sequence is GVPNFFGIQR…SKGLRREILL (226 aa).

The protein belongs to the pseudouridine synthase TruD family.

The enzyme catalyses uridine(13) in tRNA = pseudouridine(13) in tRNA. In terms of biological role, could be responsible for synthesis of pseudouridine from uracil-13 in transfer RNAs. The chain is Probable tRNA pseudouridine synthase D from Methanococcoides burtonii (strain DSM 6242 / NBRC 107633 / OCM 468 / ACE-M).